A 509-amino-acid polypeptide reads, in one-letter code: ATP synthase subunit alpha (509 aa).

171 to 178 (GDRQTGKT) contributes to the ATP binding site.

Belongs to the ATPase alpha/beta chains family. As to quaternary structure, F-type ATPases have 2 components, CF(1) - the catalytic core - and CF(0) - the membrane proton channel. CF(1) has five subunits: alpha(3), beta(3), gamma(1), delta(1), epsilon(1). CF(0) has three main subunits: a(1), b(2) and c(9-12). The alpha and beta chains form an alternating ring which encloses part of the gamma chain. CF(1) is attached to CF(0) by a central stalk formed by the gamma and epsilon chains, while a peripheral stalk is formed by the delta and b chains.

It is found in the cell inner membrane. The enzyme catalyses ATP + H2O + 4 H(+)(in) = ADP + phosphate + 5 H(+)(out). Functionally, produces ATP from ADP in the presence of a proton gradient across the membrane. The alpha chain is a regulatory subunit. In Neorickettsia sennetsu (strain ATCC VR-367 / Miyayama) (Ehrlichia sennetsu), this protein is ATP synthase subunit alpha.